Consider the following 248-residue polypeptide: Type III pantothenate kinase (248 aa).

Residue 6–13 (DIGNTETK) coordinates ATP. 103-106 (GSDR) is a binding site for substrate. Asp-105 functions as the Proton acceptor in the catalytic mechanism. Asp-124 is a binding site for K(+). Thr-127 is an ATP binding site. Thr-178 is a binding site for substrate.

The protein belongs to the type III pantothenate kinase family. As to quaternary structure, homodimer. NH4(+) is required as a cofactor. The cofactor is K(+).

The protein localises to the cytoplasm. It carries out the reaction (R)-pantothenate + ATP = (R)-4'-phosphopantothenate + ADP + H(+). It participates in cofactor biosynthesis; coenzyme A biosynthesis; CoA from (R)-pantothenate: step 1/5. Catalyzes the phosphorylation of pantothenate (Pan), the first step in CoA biosynthesis. This chain is Type III pantothenate kinase, found in Pelagibacter ubique (strain HTCC1062).